The sequence spans 258 residues: Ribose-5-phosphate isomerase (258 aa).

It belongs to the ribose 5-phosphate isomerase family.

The protein localises to the cytoplasm. The enzyme catalyses aldehydo-D-ribose 5-phosphate = D-ribulose 5-phosphate. Its pathway is carbohydrate degradation; pentose phosphate pathway; D-ribose 5-phosphate from D-ribulose 5-phosphate (non-oxidative stage): step 1/1. This Saccharomyces cerevisiae (strain YJM789) (Baker's yeast) protein is Ribose-5-phosphate isomerase (RKI1).